We begin with the raw amino-acid sequence, 214 residues long: Isochorismatase family protein 2B (214 aa).

This sequence belongs to the isochorismatase family.

The sequence is that of Isochorismatase family protein 2B from Dictyostelium discoideum (Social amoeba).